Here is a 211-residue protein sequence, read N- to C-terminus: Large ribosomal subunit protein uL4 (211 aa).

The disordered stretch occupies residues 42–73 (NNRQGTHSTKDRSEVRGGGIKPWAQKGTGRAR).

Belongs to the universal ribosomal protein uL4 family. As to quaternary structure, part of the 50S ribosomal subunit.

In terms of biological role, one of the primary rRNA binding proteins, this protein initially binds near the 5'-end of the 23S rRNA. It is important during the early stages of 50S assembly. It makes multiple contacts with different domains of the 23S rRNA in the assembled 50S subunit and ribosome. Forms part of the polypeptide exit tunnel. The protein is Large ribosomal subunit protein uL4 of Leptospira biflexa serovar Patoc (strain Patoc 1 / Ames).